The primary structure comprises 197 residues: Phospholipid hydroperoxide glutathione peroxidase (197 aa).

A Phosphoserine modification is found at serine 40. Residue selenocysteine 73 is part of the active site. Residue selenocysteine 73 is a non-standard amino acid, selenocysteine.

Belongs to the glutathione peroxidase family. Monomer. Has a tendency to form higher mass oligomers. Interacts with FUNDC1; this interaction promotes GPX4 recruitment into mitochondria through TOM/TIM complex where it is degraded by mitophagy. Expressed very intensively in the testis and weakly in lung, heart, and cerebellum.

It is found in the mitochondrion. Its subcellular location is the cytoplasm. It carries out the reaction a hydroperoxy polyunsaturated fatty acid + 2 glutathione = a hydroxy polyunsaturated fatty acid + glutathione disulfide + H2O. The enzyme catalyses 2 glutathione + H2O2 = glutathione disulfide + 2 H2O. It catalyses the reaction tert-butyl hydroperoxide + 2 glutathione = tert-butanol + glutathione disulfide + H2O. The catalysed reaction is cumene hydroperoxide + 2 glutathione = 2-phenylpropan-2-ol + glutathione disulfide + H2O. It carries out the reaction (9S)-hydroperoxy-(10E,12Z)-octadecadienoate + 2 glutathione = (9S)-hydroxy-(10E,12Z)-octadecadienoate + glutathione disulfide + H2O. The enzyme catalyses (13S)-hydroperoxy-(9Z,11E)-octadecadienoate + 2 glutathione = (13S)-hydroxy-(9Z,11E)-octadecadienoate + glutathione disulfide + H2O. It catalyses the reaction (5S)-hydroperoxy-(6E,8Z,11Z,14Z)-eicosatetraenoate + 2 glutathione = (5S)-hydroxy-(6E,8Z,11Z,14Z)-eicosatetraenoate + glutathione disulfide + H2O. The catalysed reaction is (12R)-hydroperoxy-(5Z,8Z,10E,14Z)-eicosatetraenoate + 2 glutathione = (12R)-hydroxy-(5Z,8Z,10E,14Z)-eicosatetraenoate + glutathione disulfide + H2O. It carries out the reaction (12S)-hydroperoxy-(5Z,8Z,10E,14Z)-eicosatetraenoate + 2 glutathione = (12S)-hydroxy-(5Z,8Z,10E,14Z)-eicosatetraenoate + glutathione disulfide + H2O. The enzyme catalyses (15S)-hydroperoxy-(5Z,8Z,11Z,13E)-eicosatetraenoate + 2 glutathione = (15S)-hydroxy-(5Z,8Z,11Z,13E)-eicosatetraenoate + glutathione disulfide + H2O. It catalyses the reaction (5S)-hydroperoxy-(6E,8Z,11Z,14Z,17Z)-eicosapentaenoate + 2 glutathione = (5S)-hydroxy-(6E,8Z,11Z,14Z,17Z)-eicosapentaenoate + glutathione disulfide + H2O. The catalysed reaction is (12S)-hydroperoxy-(5Z,8Z,10E,14Z,17Z)-eicosapentaenoate + 2 glutathione = (12S)-hydroxy-(5Z,8Z,10E,14Z,17Z)-eicosapentaenoate + glutathione disulfide + H2O. It carries out the reaction (15S)-hydroperoxy-(5Z,8Z,11Z,13E,17Z)-eicosapentaenoate + 2 glutathione = (15S)-hydroxy-(5Z,8Z,11Z,13E,17Z)-eicosapentaenoate + glutathione disulfide + H2O. The enzyme catalyses (15S)-hydroperoxy-(11Z,13E)-eicosadienoate + 2 glutathione = (15S)-hydroxy-(11Z,13E)-eicosadienoate + glutathione disulfide + H2O. It catalyses the reaction (17S)-hydroperoxy-(4Z,7Z,10Z,13Z,15E,19Z)-docosahexaenoate + 2 glutathione = (17S)-hydroxy-(4Z,7Z,10Z,13Z,15E,19Z)-docosahexaenoate + glutathione disulfide + H2O. The catalysed reaction is a hydroperoxy-1,2-diacyl-glycero-3-phosphocholine + 2 glutathione = a hydroxy-1,2-diacyl-glycero-3-phosphocholine + glutathione disulfide + H2O. Functionally, essential antioxidant peroxidase that directly reduces phospholipid hydroperoxide even if they are incorporated in membranes and lipoproteins. Can also reduce fatty acid hydroperoxide, cholesterol hydroperoxide and thymine hydroperoxide. Plays a key role in protecting cells from oxidative damage by preventing membrane lipid peroxidation. Required to prevent cells from ferroptosis, a non-apoptotic cell death resulting from an iron-dependent accumulation of lipid reactive oxygen species. The presence of selenocysteine (Sec) versus Cys at the active site is essential for life: it provides resistance to overoxidation and prevents cells against ferroptosis. The presence of Sec at the active site is also essential for the survival of a specific type of parvalbumin-positive interneurons, thereby preventing against fatal epileptic seizures. May be required to protect cells from the toxicity of ingested lipid hydroperoxides. Required for normal sperm development and male fertility. Essential for maturation and survival of photoreceptor cells. Plays a role in a primary T-cell response to viral and parasitic infection by protecting T-cells from ferroptosis and by supporting T-cell expansion. Plays a role of glutathione peroxidase in platelets in the arachidonic acid metabolism. Reduces hydroperoxy ester lipids formed by a 15-lipoxygenase that may play a role as down-regulator of the cellular 15-lipoxygenase pathway. Can also reduce small soluble hydroperoxides such as H2O2, cumene hydroperoxide and tert-butyl hydroperoxide. This chain is Phospholipid hydroperoxide glutathione peroxidase, found in Macaca fuscata fuscata (Japanese macaque).